Reading from the N-terminus, the 236-residue chain is Leucyl/phenylalanyl-tRNA--protein transferase (236 aa).

It belongs to the L/F-transferase family.

It localises to the cytoplasm. The enzyme catalyses N-terminal L-lysyl-[protein] + L-leucyl-tRNA(Leu) = N-terminal L-leucyl-L-lysyl-[protein] + tRNA(Leu) + H(+). The catalysed reaction is N-terminal L-arginyl-[protein] + L-leucyl-tRNA(Leu) = N-terminal L-leucyl-L-arginyl-[protein] + tRNA(Leu) + H(+). It catalyses the reaction L-phenylalanyl-tRNA(Phe) + an N-terminal L-alpha-aminoacyl-[protein] = an N-terminal L-phenylalanyl-L-alpha-aminoacyl-[protein] + tRNA(Phe). Its function is as follows. Functions in the N-end rule pathway of protein degradation where it conjugates Leu, Phe and, less efficiently, Met from aminoacyl-tRNAs to the N-termini of proteins containing an N-terminal arginine or lysine. The chain is Leucyl/phenylalanyl-tRNA--protein transferase from Shewanella pealeana (strain ATCC 700345 / ANG-SQ1).